Here is a 281-residue protein sequence, read N- to C-terminus: NADPH-dependent 7-cyano-7-deazaguanine reductase (281 aa).

89-91 lines the substrate pocket; that stretch reads VES. 91–92 serves as a coordination point for NADPH; sequence SK. Residue Cys-188 is the Thioimide intermediate of the active site. Residue Asp-195 is the Proton donor of the active site. 227–228 is a substrate binding site; that stretch reads HE. 256–257 lines the NADPH pocket; sequence RG.

It belongs to the GTP cyclohydrolase I family. QueF type 2 subfamily. As to quaternary structure, homodimer.

It is found in the cytoplasm. It catalyses the reaction 7-aminomethyl-7-carbaguanine + 2 NADP(+) = 7-cyano-7-deazaguanine + 2 NADPH + 3 H(+). It participates in tRNA modification; tRNA-queuosine biosynthesis. Its function is as follows. Catalyzes the NADPH-dependent reduction of 7-cyano-7-deazaguanine (preQ0) to 7-aminomethyl-7-deazaguanine (preQ1). The polypeptide is NADPH-dependent 7-cyano-7-deazaguanine reductase (Azoarcus sp. (strain BH72)).